Reading from the N-terminus, the 517-residue chain is Maturase K (517 aa).

The protein belongs to the intron maturase 2 family. MatK subfamily.

The protein localises to the plastid. It localises to the chloroplast. Functionally, usually encoded in the trnK tRNA gene intron. Probably assists in splicing its own and other chloroplast group II introns. This Trillium grandiflorum (Large-flowered trillium) protein is Maturase K.